A 145-amino-acid polypeptide reads, in one-letter code: MYPAHLLVLLAVCVSLLGASAIPPLPLNLVQFTYLIQCANKGSRASYHYADYGCYCGAGGSGTPVDELDRCCKIHDDCYGEAEKMGCYPKLTMYNYYCGTEGPYCNTKTDCQRYVCACDLQAAKCFARSPYNNKNYNIDTSKRCK.

Positions 1 to 21 (MYPAHLLVLLAVCVSLLGASA) are cleaved as a signal peptide. Positions 22–27 (IPPLPL) are excised as a propeptide. 7 disulfide bridges follow: C38/C98, C54/C144, C56/C72, C71/C125, C78/C118, C87/C111, and C105/C116. Ca(2+) contacts are provided by Y55, G57, and G59. Residue H75 is part of the active site. D76 contributes to the Ca(2+) binding site. Residue D119 is part of the active site.

This sequence belongs to the phospholipase A2 family. Group I subfamily. D49 sub-subfamily. Ca(2+) serves as cofactor. As to expression, expressed by the venom gland.

Its subcellular location is the secreted. The enzyme catalyses a 1,2-diacyl-sn-glycero-3-phosphocholine + H2O = a 1-acyl-sn-glycero-3-phosphocholine + a fatty acid + H(+). In terms of biological role, PLA2 catalyzes the calcium-dependent hydrolysis of the 2-acyl groups in 3-sn-phosphoglycerides. The chain is Basic phospholipase A2 cPt10 from Laticauda semifasciata (Black-banded sea krait).